A 635-amino-acid polypeptide reads, in one-letter code: Protein MICRORCHIDIA 1 (635 aa).

The disordered stretch occupies residues 491 to 511; the sequence is RTVIPDQPPTVNTYNPSPLPS. Residues 588–635 adopt a coiled-coil conformation; that stretch reads MRCEEYVKKENEVEQTVKSLEKELEEIKSKCAQLALLVDAKKKEMQQV.

The protein belongs to the MORC ATPase protein family. As to quaternary structure, homodimer and heterodimer with MORC6. Component of an RNA-directed DNA methylation (RdDM) complex that contains at least MORC6, MORC1/CRT1, MORC2, SWI3D and SUVH9. Binds directly to SUVH2 and SUVH9. Interacts with the resistance proteins RCY1, RPM1, SNC1, RPP8, SSI4 and RPS2. The interactions with various resistance proteins are disrupted when these resistance proteins are activated. Interacts with the PAMP recognition receptor FLS2. Requires Mg(2+) as cofactor. Mn(2+) is required as a cofactor. As to expression, expressed constitutively.

It localises to the nucleus. The protein localises to the endosome. Functionally, mediator of defense signaling triggered by distinct classes of R proteins. Required during hypersensitive response (HR) that confers disease resistance to turnip crinkle virus (TCV). Exhibits ATPase activity. Contributes to resistance against Pseudomonas syringae and Hyaloperonospora arabidopsidis, at early stages prior to cytosolic calcium ions Ca(2+) accumulation. Required for pathogen-associated molecular pattern (PAMP)-triggered immunity (PTI), basal resistance, non-host resistance and systemic acquired resistance (SAR). Binds DNA/RNA in a non-specific manner and exhibits endonuclease activity. Probably involved in DNA repair. Required for both RPP8- and SSI4-mediated resistance responses, thus being involved in both TIR- and CC-NB-LRR pathways. Involved in RNA-directed DNA methylation (RdDM) as a component of the RdDM machinery and required for gene silencing. May also be involved in the regulation of chromatin architecture to maintain gene silencing. The polypeptide is Protein MICRORCHIDIA 1 (Arabidopsis thaliana (Mouse-ear cress)).